The chain runs to 586 residues: Arginine--tRNA ligase (586 aa).

The 'HIGH' region motif lies at Ala133–Ser143.

The protein belongs to the class-I aminoacyl-tRNA synthetase family. As to quaternary structure, monomer.

The protein resides in the cytoplasm. It carries out the reaction tRNA(Arg) + L-arginine + ATP = L-arginyl-tRNA(Arg) + AMP + diphosphate. The sequence is that of Arginine--tRNA ligase from Leptospira interrogans serogroup Icterohaemorrhagiae serovar copenhageni (strain Fiocruz L1-130).